The sequence spans 503 residues: Lysine--tRNA ligase (503 aa).

A 'HIGH' region motif is present at residues Pro-23–Asn-31. A 'KMSKS' region motif is present at residues Ala-267 to Ser-271.

The protein belongs to the class-I aminoacyl-tRNA synthetase family.

The protein resides in the cytoplasm. It carries out the reaction tRNA(Lys) + L-lysine + ATP = L-lysyl-tRNA(Lys) + AMP + diphosphate. This Thermoplasma volcanium (strain ATCC 51530 / DSM 4299 / JCM 9571 / NBRC 15438 / GSS1) protein is Lysine--tRNA ligase.